The primary structure comprises 387 residues: MSKTQILHISDTHLGKRQYNLDFREQDVYDTFSQLIDIAIKEHVDGIIHTGDLFDINDPPNKAEIVAIRELKRLKEAGIPFIVIAGDHDSPKKFTAIYPQKILEEFDLIKFLSKPDTPYKLGEITIYGISHVPNVAKERLKELLSRLKPENKKSILLLHQGLKEVLPYEGAWQIQIDDLPKAFSYYALGHFHTRRVFQLDGGRIIEIAGSPDILREEEIEGYEKEGKGATLIDFSGDIPTIQKINIDVRKQYVVTLNTNNLREEIRKLREKYDTNNEKKPIFHIILEGKSIPKNVLMKELQEINNFAPYWRIYKDNTKEKDEKDVKIDLPTDTTIENLIYNYLVKIANFSETEARMIVDIINRADEREYVKEELMKMIGVENDNKKN.

Residues Asp-11, His-13, Asp-52, and Asp-87 each contribute to the Mn(2+) site. Residue His-88 is the Proton donor of the active site. Residues His-159, His-190, and His-192 each coordinate Mn(2+).

Belongs to the MRE11/RAD32 family. As to quaternary structure, homodimer. Forms a heterotetramer composed of two Mre11 subunits and two Rad50 subunits. Interacts with HerA. Mn(2+) is required as a cofactor.

With respect to regulation, nuclease activity is regulated by Rad50. Functionally, part of the Rad50/Mre11 complex, which is involved in the early steps of DNA double-strand break (DSB) repair. The complex may facilitate opening of the processed DNA ends to aid in the recruitment of HerA and NurA. Mre11 binds to DSB ends and has both double-stranded 3'-5' exonuclease activity and single-stranded endonuclease activity. The polypeptide is DNA double-strand break repair protein Mre11 (Sulfurisphaera tokodaii (strain DSM 16993 / JCM 10545 / NBRC 100140 / 7) (Sulfolobus tokodaii)).